A 248-amino-acid polypeptide reads, in one-letter code: Type III pantothenate kinase (248 aa).

ATP is bound at residue 6–13; that stretch reads DCGNSLIK. Substrate contacts are provided by residues Tyr-92 and 99–102; that span reads GLDR. Catalysis depends on Asp-101, which acts as the Proton acceptor. A K(+)-binding site is contributed by Asp-121. Thr-124 lines the ATP pocket. Thr-180 contributes to the substrate binding site.

It belongs to the type III pantothenate kinase family. Homodimer. The cofactor is NH4(+). K(+) serves as cofactor.

Its subcellular location is the cytoplasm. It carries out the reaction (R)-pantothenate + ATP = (R)-4'-phosphopantothenate + ADP + H(+). The protein operates within cofactor biosynthesis; coenzyme A biosynthesis; CoA from (R)-pantothenate: step 1/5. Catalyzes the phosphorylation of pantothenate (Pan), the first step in CoA biosynthesis. The chain is Type III pantothenate kinase from Pseudomonas aeruginosa (strain LESB58).